The primary structure comprises 444 residues: Trigger factor (444 aa).

Residues Gly165 to Pro250 form the PPIase FKBP-type domain.

Belongs to the FKBP-type PPIase family. Tig subfamily.

It is found in the cytoplasm. The catalysed reaction is [protein]-peptidylproline (omega=180) = [protein]-peptidylproline (omega=0). Involved in protein export. Acts as a chaperone by maintaining the newly synthesized protein in an open conformation. Functions as a peptidyl-prolyl cis-trans isomerase. The polypeptide is Trigger factor (tig) (Campylobacter jejuni subsp. jejuni serotype O:2 (strain ATCC 700819 / NCTC 11168)).